The primary structure comprises 148 residues: Protein F15 (148 aa).

Belongs to the poxviridae F15 protein family.

The chain is Protein F15 from Fowlpox virus (strain NVSL) (FPV).